Consider the following 866-residue polypeptide: Putative linoleate 9S-lipoxygenase 3 (866 aa).

Residues 33-161 (NDFGATVIDG…KYRYDRVFFA (129 aa)) form the PLAT domain. The 703-residue stretch at 164–866 (AYLPSQMPAA…AKGIPNSISI (703 aa)) folds into the Lipoxygenase domain. The interval 206–250 (YNDLGSPDSGNPRPILGGSPDTPYPRRGRTGRKPTTTDPDSESRL) is disordered. Positions 521, 526, 712, 716, and 866 each coordinate Fe cation.

It belongs to the lipoxygenase family. It depends on Fe cation as a cofactor.

The enzyme catalyses (9Z,12Z)-octadecadienoate + O2 = (9S)-hydroperoxy-(10E,12Z)-octadecadienoate. It functions in the pathway lipid metabolism; oxylipin biosynthesis. Plant lipoxygenase may be involved in a number of diverse aspects of plant physiology including growth and development, pest resistance, and senescence or responses to wounding. Catalyzes the hydroperoxidation of lipids containing a cis,cis-1,4-pentadiene structure. This Oryza sativa subsp. japonica (Rice) protein is Putative linoleate 9S-lipoxygenase 3.